Here is a 155-residue protein sequence, read N- to C-terminus: Ribosomal RNA large subunit methyltransferase H (155 aa).

Residues Leu-72, Gly-103, and 122–127 contribute to the S-adenosyl-L-methionine site; that span reads LSPLTF.

It belongs to the RNA methyltransferase RlmH family. Homodimer.

The protein localises to the cytoplasm. The catalysed reaction is pseudouridine(1915) in 23S rRNA + S-adenosyl-L-methionine = N(3)-methylpseudouridine(1915) in 23S rRNA + S-adenosyl-L-homocysteine + H(+). Its function is as follows. Specifically methylates the pseudouridine at position 1915 (m3Psi1915) in 23S rRNA. The polypeptide is Ribosomal RNA large subunit methyltransferase H (Alkalilimnicola ehrlichii (strain ATCC BAA-1101 / DSM 17681 / MLHE-1)).